Here is a 459-residue protein sequence, read N- to C-terminus: Cysteine--tRNA ligase (459 aa).

Cys31 is a binding site for Zn(2+). Positions 33–43 (PTVYYNPHIGN) match the 'HIGH' region motif. Zn(2+) contacts are provided by Cys216, His241, and Glu245. The short motif at 274 to 278 (KMSKS) is the 'KMSKS' region element. Lys277 provides a ligand contact to ATP.

It belongs to the class-I aminoacyl-tRNA synthetase family. Monomer. It depends on Zn(2+) as a cofactor.

It localises to the cytoplasm. It catalyses the reaction tRNA(Cys) + L-cysteine + ATP = L-cysteinyl-tRNA(Cys) + AMP + diphosphate. The protein is Cysteine--tRNA ligase of Rickettsia conorii (strain ATCC VR-613 / Malish 7).